A 192-amino-acid polypeptide reads, in one-letter code: Fe/S biogenesis protein NfuA (192 aa).

[4Fe-4S] cluster contacts are provided by cysteine 149 and cysteine 152.

This sequence belongs to the NfuA family. Homodimer. Requires [4Fe-4S] cluster as cofactor.

In terms of biological role, involved in iron-sulfur cluster biogenesis. Binds a 4Fe-4S cluster, can transfer this cluster to apoproteins, and thereby intervenes in the maturation of Fe/S proteins. Could also act as a scaffold/chaperone for damaged Fe/S proteins. The polypeptide is Fe/S biogenesis protein NfuA (Colwellia psychrerythraea (strain 34H / ATCC BAA-681) (Vibrio psychroerythus)).